Consider the following 282-residue polypeptide: Aldo-keto reductase MUL_1987 (282 aa).

Tyr-57 (proton donor) is an active-site residue. Positions 197, 235, 238, 246, 247, and 273 each coordinate NADPH.

Belongs to the aldo/keto reductase family.

The polypeptide is Aldo-keto reductase MUL_1987 (Mycobacterium ulcerans (strain Agy99)).